The following is a 3184-amino-acid chain: MEAEDLSKAEDRNEDPGSKNEGQLAAVQPDVPHGGQSSSPTALWDMLERKFLEYQQLTHKSPIERQKSLLSLLPLFLKAWEHSVGIICFPSLQRLAEDVSDQLAQQLQKALVGKPAEQARLAAGQLLWWKGDVDQDGYLLLKSVYVLTGTDSETLGRVAESGLPALLLQCLYLFFVFPLDKDELLESDLQVQKMFVQMLLNICSDSQGLEGLLSGSELQSLLIATTCLREHSCCFWKEPTFCVLRAISKAQNLSIIQYLQATDCVRLSLQNLSRLTDTLPAPEVSEAVSLILGFVKDSYPVSSALFLEFENSEGYPLLLKVLLRYDGLTQSEVDPHLEELLGLVVWLTTCGRSELKVFDSITYPQLEGFKFHHEASGVTVKNLQAFQVLQNVFHKASDSVLCIQVLSVIRTMWAWNARNFFLLEWTLQPISQFVEIMPLKPAPVQEHFFQLLEALVFELHYVPHEILRKVQHLIKESPGPSCTLMALQSILSIAGGDPLFTDIFRDSGLLGLLLAQLRKQAKIMRKSGNKVSTPGVQDPERELTCVMLRIVVTLLKGSVRNAVVLKDHGMVPFIKIFLDDECYREASLSILEQLSAINAEEYMSIIVGALCSSTQGELQLKLDLLKSLLRILVTPKGRAAFRVSSGFNGLLSLLSDLEGSLQEPPLQAWGAVSPRQTLELVLYTLCAVSAALHWDPVNGYFFRRNGLFEKLAEDLCLLGCFGALEEEGNLLRSWVDTKARPFADLLGTAFSSSGSLPPRIQSCLQILGFLDSMASGTLHLRGDLKESLRTKQGPVVDVQKGETGSDPQRNFKQWPDLEERMDEGDAAIMHPGVVCIMVRLLPRLYHEDHPQLSEEIQCSLASHIQSLVKSEKNRQVMCEAGLLGTLMASCHRALVTSGSPLHSRLIRIFEKLASQAIEPDVLRQFLGLGIPSSLSATTKILDSSHTHRGNPGCSGSQTAQGLAEGPWPAAPDAGLHPGVTQAPQPLGESQDSTTALQTALSLISMTSPRNLQPQRAALAPSFVEFDMSVEGYGCLFIPTLSTVMGTSTEYSVSGGIGTGATRPFPPPGGLTFSCWFLISRHGAATEGHPLRFLTLVRHLARTEQPFVCFSVSLCPDDLSLVVSTEEKEFQPLDVMEPEDDSEPSAGCQLQVRCGQLLACGQWHHLAVVVTKEMKRHCTVSTCLDGQVIGSAKMLYIQALPGPFLSMDPSAFVDVYGYIATPRVWKQKSSLIWRLGPTYLFEEAISMETLEVINKLGPRYCGNFQAVHVQGEDLDSEATPFVAEERVSFGLHIASSSITSVADIRNAYNEVDSRLIAKEMNISSRDNAMPVFLLRNCAGHLSGSLRTIGAVAVGQLGVRVFHSSPAASSLDFIGGPAILLGLISLATDDHTMYAAVKVLHSVLTSNAMCDFLMQHICGYQIMAFLLRKKASLLNHRIFQLILSVAGTVELGFRSSAITNTGVFQHILCNFELWMNTADNLELSLFSHLLEILQSPREGPRNAEAAHQAQLIPKLIFLFNEPSLIPSKISTIIGILACQLRGHFSTQDLLRIGLFVVYTLKPSSVNERQICMDGALDPSLPAGSQTSGKTIWLRNQLLEMLLSVISSPQLHLSSESKEEMFLKLGPDWFLLLLQGHLHASTTVLALKLLLYFLASPSLRTRFRDGLCAGSWVERSTEGVDIVMDNLKSQSPLPEQSPCLLPGFRVLNDFLAHHVHIPEVYLIVSTFFLQTPLTELMDGPKDSLDAMLQWLLQRHHQEEVLQAGLCTEGALLLLEMLKATMSQPLAGSEDGAWAQTFPASVLQFLSLVHRTYPQDPAWRAPEFLQTLAIAAFPLGAQKGVGAESTRNTSSPEAAAEGDSTVEGLQAPTKAHPARRKLREFTQLLLRELLLGASSPKQWLPLEVLLEASPDHATSQQKRDFQSEVLLSAMELFHMTSGGDAAMFRDGKEPQPSAEAAAAPSLANISCFTQKLVEKLYSGMFSADPRHILLFILEHIMVVIETASSQRDTVLSTLYSSLNKVILYCLSKPQQSLSECLGLLSILGFLQEHWDVVFATYNSNISFLLCLMHCLLLLNERSYPEGFGLEPKPRMSTYHQVFLSPNEDVKEKREDLPSLSDVQHNIQKTVQTLWQQLVAQRQQTLEDAFKIDLSVKPGEREVKIEEVTPLWEETMLKAWQHYLASEKKSLASRSNVAHHSKVTLWSGSLSSAMKLMPGRQAKDPECKTEDFVSCIENYRRRGQELYASLYKDHVQRRKCGNIKAANAWARIQEQLFGELGLWSQGEETKPCSPWELDWREGPARMRKRIKRLSPLEALSSGRHKESQDKNDHISQTNAENQDELTLREAEGEPDEVGVDCTQLTFFPALHESLHSEDFLELCRERQVILQELLDKEKVTQKFSLVIVQGHLVSEGVLLFGHQHFYICENFTLSPTGDVYCTRHCLSNISDPFIFNLCSKDRSTDHYSCQCHSYADMRELRQARFLLQDIALEIFFHNGYSKFLVFYNNDRSKAFKSFCSFQPSLKGKATSEDTLSLRRYPGSDRIMLQKWQKRDISNFEYLMYLNTAAGRTCNDYMQYPVFPWVLADYTSETLNLANPKIFRDLSKPMGAQTKERKLKFIQRFKEVEKTEGDMTVQCHYYTHYSSAIIVASYLVRMPPFTQAFCALQGGSFDVADRMFHSVKSTWESASRENMSDVRELTPEFFYLPEFLTNCNGVEFGCMQDGTVLGDVQLPPWADGDPRKFISLHRKALESDFVSANLHHWIDLIFGYKQQGPAAVDAVNIFHPYFYGDRMDLSSITDPLIKSTILGFVSNFGQVPKQLFTKPHPARTAAGKPLPGKDVSTPVSLPGHPQPFFYSLQSLRPSQVTVKDMYLFSLGSESPKGAIGHIVSTEKTILAVERNKVLLPPLWNRTFSWGFDDFSCCLGSYGSDKVLMTFENLAAWGRCLCAVCPSPTTIVTSGTSTVVCVWELSMTKGRPRGLRLRQALYGHTQAVTCLAASVTFSLLVSGSQDCTCILWDLDHLTHVTRLPAHREGISAITISDVSGTIVSCAGAHLSLWNVNGQPLASITTAWGPEGAITCCCLMEGPAWDTSQIIITGSQDGMVRVWKTEDVKMSVPGRPAGEEPPAQPPSPRGHKWEKNLALSRELDVSIALTGKPSKTSPAVTALAVSRNHTKLLVGDERGRIFCWSADG.

The segment covering 1 to 18 (MEAEDLSKAEDRNEDPGS) has biased composition (basic and acidic residues). 4 disordered regions span residues 1–39 (MEAE…QSSS), 944–993 (SHTH…QDST), 1837–1869 (VGAE…KAHP), and 2309–2335 (ALSS…NQDE). Residues 981-993 (QAPQPLGESQDST) show a composition bias toward polar residues. Residues 2314 to 2324 (RHKESQDKNDH) are compositionally biased toward basic and acidic residues. One can recognise a BEACH-type PH domain in the interval 2385–2510 (LDKEKVTQKF…DRSKAFKSFC (126 aa)). Residues 2527–2821 (SLRRYPGSDR…QLFTKPHPAR (295 aa)) enclose the BEACH domain. WD repeat units lie at residues 2863 to 2922 (MYLF…YGSD), 2923 to 2972 (KVLM…PRGL), 2973 to 3014 (RLRQ…LDHL), 3015 to 3057 (THVT…GQPL), 3058 to 3141 (ASIT…ELDV), and 3142 to 3184 (SIAL…SADG). Residues 3107–3128 (SVPGRPAGEEPPAQPPSPRGHK) form a disordered region.

Interacts with HSP90AB1.

The protein resides in the early endosome. It localises to the endoplasmic reticulum. Its function is as follows. Plays a critical role in the regulation of cDC1-mediated cross-presentation of viral and tumor antigens in dendritic cells. Mechanistically, acts near the plasma membrane and interacts with endosomal membranes to promote endosomal-to-cytosol antigen trafficking. Also plays a role in B-cell survival through regulation of autophagy. This chain is WD repeat- and FYVE domain-containing protein 4 (WDFY4), found in Homo sapiens (Human).